The sequence spans 98 residues: uncharacterized protein (98 aa).

The helical transmembrane segment at 10–30 (LYGFFAVTGVLIASFIIGEIV) threads the bilayer.

Its subcellular location is the host membrane. This is an uncharacterized protein from Saccharolobus islandicus (Sulfolobus islandicus).